The sequence spans 151 residues: uncharacterized protein (151 aa).

Residues 122-151 (GVAQRQVPTTGTHSFFHCTSEGNKEKPHHF) are disordered.

This is an uncharacterized protein from Homo sapiens (Human).